The primary structure comprises 464 residues: tRNA modification GTPase MnmE (464 aa).

Residues arginine 27, glutamate 90, and lysine 129 each coordinate (6S)-5-formyl-5,6,7,8-tetrahydrofolate. Residues 222 to 384 (GIALVLAGSV…LYDKIRSLTC (163 aa)) enclose the TrmE-type G domain. Residues 232-237 (NVGKSS), 251-257 (SSYAGTT), and 276-279 (DTAG) contribute to the GTP site. Mg(2+)-binding residues include serine 236 and threonine 257. Position 464 (lysine 464) interacts with (6S)-5-formyl-5,6,7,8-tetrahydrofolate.

This sequence belongs to the TRAFAC class TrmE-Era-EngA-EngB-Septin-like GTPase superfamily. TrmE GTPase family. In terms of assembly, homodimer. Heterotetramer of two MnmE and two MnmG subunits. The cofactor is K(+).

It is found in the cytoplasm. Functionally, exhibits a very high intrinsic GTPase hydrolysis rate. Involved in the addition of a carboxymethylaminomethyl (cmnm) group at the wobble position (U34) of certain tRNAs, forming tRNA-cmnm(5)s(2)U34. The chain is tRNA modification GTPase MnmE from Borrelia turicatae (strain 91E135).